Consider the following 292-residue polypeptide: uncharacterized protein (292 aa).

4 consecutive transmembrane segments (helical) span residues 17–37 (LFYT…FPAL), 135–155 (LIAV…IGQL), 166–186 (TTLW…YDIV), and 216–236 (FHGV…TALY). The segment at 267 to 292 (EKSEDKKSIVTSRIEEENEDEISDYE) is disordered. A compositionally biased stretch (acidic residues) spans 282–292 (EENEDEISDYE).

Its subcellular location is the membrane. This is an uncharacterized protein from Caenorhabditis elegans.